The primary structure comprises 211 residues: Ribonuclease MRP protein subunit rmp1 (211 aa).

Residues 73–93 traverse the membrane as a helical segment; it reads PALGLVLLGILARVWFVMGGI. Ser156 is subject to Phosphoserine. Positions 178–211 are disordered; that stretch reads SQGTKRKSKNSNSTVKKKKKRARKGRDEIDDIFG. The span at 181-201 shows a compositional bias: basic residues; that stretch reads TKRKSKNSNSTVKKKKKRARK.

As to quaternary structure, component of RNase MRP complex which consists of an RNA moiety and at least 10 protein subunits.

It is found in the membrane. It localises to the nucleus. Its subcellular location is the nucleolus. Functionally, functions as part of ribonuclease MRP (RNase MRP), which is involved in rRNA processing in mitochondria. The polypeptide is Ribonuclease MRP protein subunit rmp1 (Schizosaccharomyces pombe (strain 972 / ATCC 24843) (Fission yeast)).